The sequence spans 1044 residues: Translation initiation factor IF-2 (1044 aa).

The segment at 31-425 (VRSASSTVEP…RKSKRAKRQE (395 aa)) is disordered. Pro residues-rich tracts occupy residues 77–98 (GPAP…PQPA) and 106–116 (APAPAPAPRPA). Low complexity predominate over residues 117 to 148 (EPAANPAPAAPPAFQAPAPAPAERPAAAQRPA). Positions 168–185 (GGPGQGPRPGARPGGPGA) are enriched in gly residues. A compositionally biased stretch (basic and acidic residues) spans 204 to 247 (GPGDRPERSERPDRGDRPQGDRPRSDRPQGERQQGDRPQGDRPG). Over residues 285 to 304 (GGAPRPGNNPFASNQGMPRP) the composition is skewed to low complexity. The span at 305-328 (QGGPRPTPAGPGGPRPGGPRPNPG) shows a compositional bias: pro residues. Residues 329–338 (MMPARPTVGR) show a composition bias toward low complexity. A compositionally biased stretch (gly residues) spans 339–409 (PGAGPGAGRP…GTQGAFGRAG (71 aa)). The span at 413-422 (VRGRKSKRAK) shows a compositional bias: basic residues. The tr-type G domain occupies 537–709 (ARPPVVTVMG…VLLTADASLD (173 aa)). Residues 546-553 (GHVDHGKT) are G1. A GTP-binding site is contributed by 546–553 (GHVDHGKT). Positions 571-575 (GITQH) are G2. The segment at 596–599 (DTPG) is G3. GTP is bound by residues 596-600 (DTPGH) and 650-653 (NKVD). The tract at residues 650–653 (NKVD) is G4. The segment at 686 to 688 (SAR) is G5.

Belongs to the TRAFAC class translation factor GTPase superfamily. Classic translation factor GTPase family. IF-2 subfamily.

It localises to the cytoplasm. Functionally, one of the essential components for the initiation of protein synthesis. Protects formylmethionyl-tRNA from spontaneous hydrolysis and promotes its binding to the 30S ribosomal subunits. Also involved in the hydrolysis of GTP during the formation of the 70S ribosomal complex. This is Translation initiation factor IF-2 from Kineococcus radiotolerans (strain ATCC BAA-149 / DSM 14245 / SRS30216).